Consider the following 527-residue polypeptide: Type 2 DNA topoisomerase 6 subunit B (527 aa).

ATP-binding positions include Asn39, Asp73, 94–95, 103–110, and Lys421; these read SK and GVFGLGLK.

It belongs to the TOP6B family. In terms of assembly, homodimer. Heterotetramer of two Top6A and two Top6B chains.

The catalysed reaction is ATP-dependent breakage, passage and rejoining of double-stranded DNA.. Relaxes both positive and negative superturns and exhibits a strong decatenase activity. This Pyrobaculum aerophilum (strain ATCC 51768 / DSM 7523 / JCM 9630 / CIP 104966 / NBRC 100827 / IM2) protein is Type 2 DNA topoisomerase 6 subunit B.